The following is a 303-amino-acid chain: Serine/arginine-rich splicing factor SC35 (303 aa).

Residue Ser-7 is modified to Phosphoserine. Residues 16–94 (YSLLVLNITF…REITVQFAKY (79 aa)) form the RRM domain. Positions 100 to 303 (KISKGRVVEP…SRSQSPYAAE (204 aa)) are disordered. A compositionally biased stretch (basic residues) spans 112–148 (KSRRSRSRSPRRSRSPRRSRSPPRRRSPRRSRSPRRR). 2 stretches are compositionally biased toward basic and acidic residues: residues 149–158 (SRDDYREKDY) and 165–178 (RSYD…EKDR). A phosphoserine mark is found at Ser-186 and Ser-188. Over residues 190–207 (SPDEKRRVRGRYDNESRS) the composition is skewed to basic and acidic residues. 2 stretches are compositionally biased toward low complexity: residues 210 to 226 (RSLS…SSSP) and 244 to 257 (RSPS…PRSP). Ser-251, Ser-253, Ser-256, Ser-263, Ser-278, Ser-280, Ser-283, Ser-296, and Ser-298 each carry phosphoserine. The span at 294-303 (SRSQSPYAAE) shows a compositional bias: polar residues.

This sequence belongs to the splicing factor SR family. SC subfamily. Component of the spliceosome. Interacts with SNRNP35, CYP59 and RS2Z33.

The protein localises to the nucleus speckle. Functionally, probably involved in intron recognition and spliceosome assembly, but not involved in alternative splicing regulation of the SCL33 intron. The chain is Serine/arginine-rich splicing factor SC35 (SC35) from Arabidopsis thaliana (Mouse-ear cress).